The following is a 1565-amino-acid chain: Major cell-surface adhesin PAc (1565 aa).

A signal peptide spans 1-38; that stretch reads MKVKKTYGFRKSKISKTLCGAVLGTVAAVSVAGQKVFA. The segment covering 42–54 has biased composition (low complexity); sequence TTTSDVDTKVVGT. Residues 42-81 are disordered; the sequence is TTTSDVDTKVVGTQTGNPATNLPEAQGSASKEAEQSQTKL. Over residues 72–81 the composition is skewed to basic and acidic residues; it reads KEAEQSQTKL. 4 Ag I/II A repeats span residues 146-220, 221-302, 303-384, and 385-466; these read KKTT…QKTN, AANQ…QEAN, AANE…KKAN, and AANE…QKDL. Residues 203 to 448 are heptad repeats of Y-[EQ]-X-X-L-A-X; sequence EAKLAQYQAD…KRNADAKADY (246 aa). Positions 461 to 834 are V-region (lectin-like); it reads KYQKDLADYP…VNVPKVTKEK (374 aa). Disordered regions lie at residues 827-985 and 1486-1511; these read VPKV…PTPP and NTVKTTTPEDPADPTDPQDPSSPRTS. The P1 repeat unit spans residues 848-887; the sequence is TYETEKPLKPAPVAPNYEKEPTPPTRTPDQAEPNKPTPPT. Residues 888–926 form a P2 repeat; sequence YETEKPLEPAPVEPSYEAEPTPPTRTPDQAEPNKPTPPT. Residues 927–964 form a P3 repeat; that stretch reads YETEKPLEPAPVEPSYEAEPTPPTPTPDQPEPNKPVEP. The span at 946–961 shows a compositional bias: pro residues; the sequence is PTPPTPTPDQPEPNKP. The short motif at 1532–1536 is the LPXTG sorting signal element; sequence LPNTG. Thr-1535 bears the Pentaglycyl murein peptidoglycan amidated threonine mark. The propeptide at 1536 to 1565 is removed by sortase; sequence GVTNNAYMPLLGIIGLVTSFSLLGLKAKKD.

The protein belongs to the antigen I/II family.

The protein localises to the secreted. The protein resides in the cell wall. Functionally, surface protein antigen implicated in dental caries. This chain is Major cell-surface adhesin PAc, found in Streptococcus mutans.